Here is a 686-residue protein sequence, read N- to C-terminus: Endonuclease GajA (686 aa).

Positions 1-423 (MYLKSLKIYN…NYVTTKNNYT (423 aa)) are ATPase domain. 52–56 (NCGKT) is a binding site for ATP. A toprim domain region spans residues 463 to 599 (FFSDAIIFVE…TSFEEAFILT (137 aa)). Residues Glu-472, Glu-476, Asp-559, and Glu-604 each coordinate a divalent metal cation.

Homotetramer. Forms the core of the anti-phage defense complex. Interacts with GajB; 2 GajB dimers dock at opposite sides of the GajA complex to form a 4:4 GajA-GajB assembly (GajAB). GajAB interacts with Bacillus phage Phi3T Gad1 protein; this interaction forms a 4:4:8 GajAB-Gad1 complex and leads to GajAB inhibition. It depends on Mg(2+) as a cofactor.

In terms of biological role, component of antiviral defense system Gabija type II, composed of GajA and GajB. Probably a nicking endonuclease that is strongly inhibited by physiological levels of nucleotides (NTP and dNTP). Expression of Gabija type II in B.subtilis (strain BEST7003) confers resistance to phages phi105, and SpBeta. During viral replication, when nucleotides are rapidly consumed, it is de-suppressed and degrades target DNA. In Bacillus cereus (strain HuB5-5), this protein is Endonuclease GajA.